The sequence spans 252 residues: MSFTVVIPARYQSTRLPGKPLADIGGKPMIQWVYEQAMQAGADRVIIATDDERVEQAVQAFGGVVCMTSPNHQSGTERLAEVVAKMAIPADHIVVNVQGDEPLIPPAIIRQVADNLAACSAPMATLAVEIEDEAEVFNPNAVKVITDKSGYALYFSRATIPWDRDNFAKADKAIVQPLLRHIGIYAYRAGFINTYLDWQPSQLEKIECLEQLRVLWHGEKIHVAVALEAPPAGVDTPEDLEVVRRIVAERAQ.

The protein belongs to the KdsB family.

It localises to the cytoplasm. It catalyses the reaction 3-deoxy-alpha-D-manno-oct-2-ulosonate + CTP = CMP-3-deoxy-beta-D-manno-octulosonate + diphosphate. Its pathway is nucleotide-sugar biosynthesis; CMP-3-deoxy-D-manno-octulosonate biosynthesis; CMP-3-deoxy-D-manno-octulosonate from 3-deoxy-D-manno-octulosonate and CTP: step 1/1. It functions in the pathway bacterial outer membrane biogenesis; lipopolysaccharide biosynthesis. Activates KDO (a required 8-carbon sugar) for incorporation into bacterial lipopolysaccharide in Gram-negative bacteria. This Vibrio cholerae serotype O1 (strain ATCC 39315 / El Tor Inaba N16961) protein is 3-deoxy-manno-octulosonate cytidylyltransferase.